Reading from the N-terminus, the 55-residue chain is Large ribosomal subunit protein bL32 (55 aa).

Positions 1–19 (MAVPKRRMSRANTHSRRSQ) are enriched in basic residues. The interval 1 to 20 (MAVPKRRMSRANTHSRRSQW) is disordered.

Belongs to the bacterial ribosomal protein bL32 family.

This chain is Large ribosomal subunit protein bL32, found in Corynebacterium jeikeium (strain K411).